The following is a 450-amino-acid chain: UDP-N-acetylmuramoylalanine--D-glutamate ligase (450 aa).

Position 119–125 (119–125 (GSNGKTT)) interacts with ATP.

Belongs to the MurCDEF family.

The protein resides in the cytoplasm. It catalyses the reaction UDP-N-acetyl-alpha-D-muramoyl-L-alanine + D-glutamate + ATP = UDP-N-acetyl-alpha-D-muramoyl-L-alanyl-D-glutamate + ADP + phosphate + H(+). The protein operates within cell wall biogenesis; peptidoglycan biosynthesis. Its function is as follows. Cell wall formation. Catalyzes the addition of glutamate to the nucleotide precursor UDP-N-acetylmuramoyl-L-alanine (UMA). The chain is UDP-N-acetylmuramoylalanine--D-glutamate ligase from Streptococcus pneumoniae (strain Hungary19A-6).